The primary structure comprises 702 residues: Phosphoglycerol transferase I (702 aa).

A run of 3 helical transmembrane segments spans residues 3-25, 73-95, and 102-124; these read WILALSLLLLLLLLVASPRLAWL, GYIAVFIGMVLLSLSPLVLLRVR, and GGGAVFGAFVVMLLVSVAVSPLY.

It belongs to the OpgB family.

The protein localises to the cell inner membrane. The enzyme catalyses a phosphatidylglycerol + a membrane-derived-oligosaccharide D-glucose = a 1,2-diacyl-sn-glycerol + a membrane-derived-oligosaccharide 6-(glycerophospho)-D-glucose.. It participates in glycan metabolism; osmoregulated periplasmic glucan (OPG) biosynthesis. Transfers a phosphoglycerol residue from phosphatidylglycerol to the membrane-bound nascent glucan backbones. The protein is Phosphoglycerol transferase I of Xanthomonas campestris pv. campestris (strain ATCC 33913 / DSM 3586 / NCPPB 528 / LMG 568 / P 25).